We begin with the raw amino-acid sequence, 2293 residues long: Protein Ycf2 (2293 aa).

1647 to 1654 (GSIGTGRS) contacts ATP.

The protein belongs to the Ycf2 family.

It is found in the plastid. Its subcellular location is the chloroplast stroma. In terms of biological role, probable ATPase of unknown function. Its presence in a non-photosynthetic plant (Epifagus virginiana) and experiments in tobacco indicate that it has an essential function which is probably not related to photosynthesis. The protein is Protein Ycf2 of Lobularia maritima (Sweet alyssum).